The chain runs to 405 residues: Envelope glycoprotein M (405 aa).

The Intravirion segment spans residues 1 to 17; that stretch reads MKSSKNDTFVYRTWVKT. The helical transmembrane segment at 18–38 threads the bilayer; the sequence is LVVYFVMFVMSAVVPITAMFP. Residues 39 to 76 lie on the Virion surface side of the membrane; it reads NLGYPCYFNALVDYGALNLTNYNLAHHLTPTLYLEPPE. The helical transmembrane segment at 77-97 threads the bilayer; sequence MFVYITLVFIADCVAFIYYAC. Over 98 to 121 the chain is Intravirion; sequence GEVALIKARKKVSGLTDLSAWVSA. Residues 122–142 traverse the membrane as a helical segment; it reads VGSPTVLFLAILKLWSIQVFI. Residues 143 to 149 are Virion surface-facing; the sequence is QVLSYKH. Residues 150–170 traverse the membrane as a helical segment; it reads VFLSAFVYFLHFLASVLHACA. At 171 to 192 the chain is on the intravirion side; it reads CVTRFSPVWVVKAQDNSIPQDT. Residues 193–215 traverse the membrane as a helical segment; sequence FLWWVVFYLKPVVTNLYLGCLAL. The Virion surface portion of the chain corresponds to 216–245; the sequence is ETLVFSLSVFLALGNSFYFMVGDMVLGAVN. A helical transmembrane segment spans residues 246 to 266; sequence LFLILPIFWYILTEVWLASFM. Position 267 (Arg-267) is a topological domain, intravirion. Residues 268-288 form a helical membrane-spanning segment; it reads HNFGFYCGMFIASIILILPLV. At 289-299 the chain is on the virion surface side; sequence RYEAVFVSAKL. The chain crosses the membrane as a helical span at residues 300–320; it reads HTTVAINVAIIPILCSVAMLI. At 321-405 the chain is on the intravirion side; that stretch reads RICRIFKSMR…TTDSEEEIFP (85 aa). The disordered stretch occupies residues 346–405; sequence LESEPRPRPSRTPSPGRNRRRSSTSSSSSRSTRRQRPVSTQALVSSVLPMTTDSEEEIFP. The span at 386–397 shows a compositional bias: polar residues; that stretch reads QALVSSVLPMTT.

Belongs to the herpesviridae glycoprotein M family. Interacts (via N-terminus) with gN (via N-terminus). The gM-gN heterodimer forms the gCII complex.

It localises to the virion membrane. It is found in the host Golgi apparatus. The protein localises to the host trans-Golgi network. The protein resides in the host endosome membrane. Its subcellular location is the host nucleus inner membrane. Envelope glycoprotein important for virion assembly and egress. Plays a role in the correct incorporation of gH-gL into virion membrane. Directs the glycoprotein N (gN) to the host trans-Golgi network. This is Envelope glycoprotein M from Epstein-Barr virus (strain GD1) (HHV-4).